The primary structure comprises 262 residues: Protein CUSTOS (262 aa).

Disordered regions lie at residues 1–79 and 126–262; these read MAAP…LQTT and FTSV…IPAN. Over residues 9–18 the composition is skewed to low complexity; it reads SDSESSNSSS. A compositionally biased stretch (polar residues) spans 51 to 61; the sequence is ANSQLSTSQPS. Ser-61 carries the phosphoserine modification. Position 79 is a phosphothreonine (Thr-79). Position 138 is a phosphoserine (Ser-138). At Thr-182 the chain carries Phosphothreonine. Basic residues predominate over residues 188–199; it reads KKKRKLKKKAKK. Over residues 200-209 the composition is skewed to low complexity; sequence VASVDSAVAA. Positions 210-221 are enriched in polar residues; sequence TTPTSMATVQKQ. Thr-211 carries the post-translational modification Phosphothreonine. The short motif at 236–241 is the Nucleolar localization signal (NLS) element; sequence KKKKKA.

It belongs to the CUSTOS family.

Its subcellular location is the nucleus envelope. Functionally, plays a role in the regulation of Wnt signaling pathway during early development. This is Protein CUSTOS from Homo sapiens (Human).